The sequence spans 192 residues: Thymidine kinase (192 aa).

ATP contacts are provided by residues 9–16 (SAMNAGKS) and 87–90 (DECQ). Glutamate 88 serves as the catalytic Proton acceptor. Residues cysteine 145, cysteine 147, cysteine 182, and histidine 185 each coordinate Zn(2+).

This sequence belongs to the thymidine kinase family. As to quaternary structure, homotetramer.

Its subcellular location is the cytoplasm. The catalysed reaction is thymidine + ATP = dTMP + ADP + H(+). The chain is Thymidine kinase from Vibrio parahaemolyticus serotype O3:K6 (strain RIMD 2210633).